The following is a 704-amino-acid chain: Glycine--tRNA ligase beta subunit (704 aa).

The protein belongs to the class-II aminoacyl-tRNA synthetase family. In terms of assembly, tetramer of two alpha and two beta subunits.

The protein localises to the cytoplasm. It catalyses the reaction tRNA(Gly) + glycine + ATP = glycyl-tRNA(Gly) + AMP + diphosphate. This Rhizobium etli (strain CIAT 652) protein is Glycine--tRNA ligase beta subunit.